The chain runs to 1985 residues: Voltage-dependent L-type calcium channel subunit alpha-1F (1985 aa).

Residues 1–11 (MSESEVGKDTT) are compositionally biased toward basic and acidic residues. The tract at residues 1–56 (MSESEVGKDTTPEPSPANGTGPGPEWGLCPGPPTVGTDTSGASGLGTPRRRTQHNK) is disordered. Residues 1–92 (MSESEVGKDT…RSCISIVEWK (92 aa)) are Cytoplasmic-facing. One copy of the I repeat lies at 79–375 (NPIRRSCISI…LVLGVLSGEF (297 aa)). Residues 93–111 (PFDILILLTIFANCVALGV) traverse the membrane as a helical segment. The Extracellular portion of the chain corresponds to 112-129 (YIPFPEDDSNTANHNLEQ). A helical membrane pass occupies residues 130–149 (VEYVFLVIFTVETVLKIVAY). Residues 150–161 (GLVLHPSAYIRN) are Cytoplasmic-facing. A helical membrane pass occupies residues 162-180 (GWNLLDFIIVVVGLFSVLL). The Extracellular segment spans residues 181 to 201 (EQGPGRPGDAPHTGGKPGGFD). Residues 202–220 (VKALRAFRVLRPLRLVSGV) traverse the membrane as a helical segment. Over 221–239 (PSLHIVVNSIMKALVPLLH) the chain is Cytoplasmic. Residues 240–259 (IALLVLFVIIIYAIIGLELF) form a helical membrane-spanning segment. Residues 260 to 347 (LGRMHKTCYF…WMQDAMGYEL (88 aa)) lie on the Extracellular side of the membrane. An N-linked (GlcNAc...) asparagine glycan is attached at N295. E330 serves as a coordination point for Ca(2+). Residues 348–372 (PWVYFVSLVIFGSFFVLNLVLGVLS) form a helical membrane-spanning segment. Residues 373–529 (GEFSKEREKA…ARCRRAVKSN (157 aa)) are Cytoplasmic-facing. Residues 395–412 (QQMEEDLRGYLDWITQAE) form a binding to the beta subunit region. Positions 455 to 469 (SHSTRSTHSTSSHAS) are enriched in low complexity. The disordered stretch occupies residues 455–490 (SHSTRSTHSTSSHASLPASDTGSMTDTPGDEDEEEG). The II repeat unit spans residues 515 to 761 (NRGLRARCRR…VFLAIAVDNL (247 aa)). A helical membrane pass occupies residues 530 to 549 (ACYWAVLLLVFLNTLTIASE). At 550–564 (HHGQPLWLTQTQEYA) the chain is on the extracellular side. Residues 565-583 (NKVLLCLFTVEMLLKLYGL) form a helical membrane-spanning segment. At 584-591 (GPSVYVAS) the chain is on the cytoplasmic side. A helical membrane pass occupies residues 592 to 610 (FFNRFDCFVVCGGILETTL). Over 611 to 620 (VEVGAMQPLG) the chain is Extracellular. Residues 621-639 (ISVLRCVRLLRIFKVTRHW) traverse the membrane as a helical segment. Over 640–658 (ASLSNLVASLLNSMKSIAS) the chain is Cytoplasmic. Residues 659-679 (LLLLLFLFIIIFSLLGMQLFG) traverse the membrane as a helical segment. Residues 680-733 (GKFNFDQTHTKRSTFDTFPQALLTVFQILTGEDWNVVMYDGIMAYGGPFFPGML) are Extracellular-facing. E711 is a binding site for Ca(2+). Residues 734 to 758 (VCVYFIILFICGNYILLNVFLAIAV) form a helical membrane-spanning segment. At 759–876 (DNLASGDAGT…KACHTLIHHH (118 aa)) the chain is on the cytoplasmic side. The segment at 766-834 (AGTAKDKGRE…EEEEENGAGH (69 aa)) is disordered. Positions 768 to 787 (TAKDKGREKSSEGNPPKENK) are enriched in basic and acidic residues. The span at 810–830 (MEEEEEEEEEEEEEEEEEEEN) shows a compositional bias: acidic residues. The III repeat unit spans residues 858–1140 (CLSQTNPLRK…FFMMNIFVGF (283 aa)). The helical transmembrane segment at 877-895 (IFTSLILVFIILSSVSLAA) threads the bilayer. At 896-911 (EDPIRAHSFRNHILGY) the chain is on the extracellular side. A helical transmembrane segment spans residues 912–931 (FDYAFTSIFTVEILLKMTVF). At 932–943 (GAFLHRGSFCRS) the chain is on the cytoplasmic side. A helical transmembrane segment spans residues 944–962 (WFNLLDLLVVSVSLISFGI). The Extracellular segment spans residues 963–968 (HSSAIS). A helical membrane pass occupies residues 969 to 988 (VVKILRVLRVLRPLRAINRA). Topologically, residues 989–1007 (KGLKHVVQCVFVAIRTIGN) are cytoplasmic. A helical transmembrane segment spans residues 1008–1027 (IMIVTTLLQFMFACIGVQLF). The Extracellular segment spans residues 1028–1117 (KGKFYSCTDE…EGPIYNYHVE (90 aa)). A dihydropyridine binding region spans residues 1065-1155 (RLWVNSDFNF…RAQGEQEYQN (91 aa)). E1091 serves as a coordination point for Ca(2+). Residues 1118-1138 (ISVFFIVYIIIIAFFMMNIFV) form a helical membrane-spanning segment. The Cytoplasmic portion of the chain corresponds to 1139–1195 (GFVIITFRAQGEQEYQNCELDKNQRQCVEYALKAQPLRRYIPKNPHQYRVWATVNSR). Residues 1182–1449 (NPHQYRVWAT…LFVAVIMDNF (268 aa)) form an IV repeat. Residues 1196–1214 (AFEYLMFLLILLNTVALAM) traverse the membrane as a helical segment. Topologically, residues 1215-1229 (QHYEQTAPFNYAMDI) are extracellular. Residues 1230–1249 (LNMVFTGLFTIEMVLKIIAF) traverse the membrane as a helical segment. Topologically, residues 1250–1256 (KPKHYFA) are cytoplasmic. A helical membrane pass occupies residues 1257–1278 (DAWNTFDALIVVGSVVDIAVTE). The Extracellular segment spans residues 1279–1295 (VNNGGHLGESSEDTSRI). The helical transmembrane segment at 1296–1315 (SITFFRLFRVMRLVKLLSKG) threads the bilayer. Residues 1316-1334 (EGIRTLLWTFIKSFQALPY) are Cytoplasmic-facing. The helical transmembrane segment at 1335 to 1354 (VALLIAMIFFIYAVIGMQMF) threads the bilayer. The Extracellular segment spans residues 1355–1421 (GLVALQDGTQ…GEEFTCGSSF (67 aa)). Positions 1402–1468 (RCDPESDFGP…LGPHHLDEFK (67 aa)) are dihydropyridine binding. The tract at residues 1414–1457 (EFTCGSSFAIVYFISFFMLCAFLIINLFVAVIMDNFDYLTRDWS) is phenylalkylamine binding. Residues 1422–1446 (AIVYFISFFMLCAFLIINLFVAVIM) form a helical membrane-spanning segment. The Cytoplasmic segment spans residues 1447–1982 (DNFDYLTRDW…EDLGDEMACV (536 aa)). Disordered stretches follow at residues 1643–1729 (VTEE…PHRR) and 1746–1778 (LKGTQGQDNQNEEQELPDWTPDLDRAGRDSFEP). The span at 1644–1665 (TEEEEEEEEAVGQEAEEEEAEN) shows a compositional bias: acidic residues. Polar residues-rich tracts occupy residues 1675 to 1687 (DSQPQSRWNSRIS) and 1713 to 1724 (NSRQPSVIQAGS). Basic and acidic residues predominate over residues 1767-1776 (DLDRAGRDSF).

Belongs to the calcium channel alpha-1 subunit (TC 1.A.1.11) family. CACNA1F subfamily. Voltage-dependent calcium channels are multisubunit complexes, consisting of alpha-1, alpha-2, beta and delta subunits in a 1:1:1:1 ratio. The channel activity is directed by the pore-forming and voltage-sensitive alpha-1 subunit. In many cases, this subunit is sufficient to generate voltage-sensitive calcium channel activity. The auxiliary subunits beta and alpha-2/delta linked by a disulfide bridge regulate the channel activity. Interacts (via IQ domain) with CABP4; in a calcium independent manner. As to expression, expressed in the inner and outer nuclear layers and the genglion cell layer of the retina.

It is found in the membrane. The enzyme catalyses Ca(2+)(in) = Ca(2+)(out). Voltage-sensitive calcium channels (VSCC) mediate the entry of calcium ions into excitable cells and are also involved in a variety of calcium-dependent processes, including muscle contraction, hormone or neurotransmitter release, gene expression, cell motility, cell division and cell death. The isoform alpha-1F gives rise to L-type calcium currents. Long-lasting (L-type) calcium channels belong to the 'high-voltage activated' (HVA) group. They are blocked by dihydropyridines (DHP), phenylalkylamines, and by benzothiazepines. Activates at more negative voltages and does not undergo calcium-dependent inactivation (CDI), due to incoming calcium ions, during depolarization. In Mus musculus (Mouse), this protein is Voltage-dependent L-type calcium channel subunit alpha-1F.